The primary structure comprises 303 residues: Bifunctional protein FolD 2 (303 aa).

NADP(+) is bound by residues 169 to 171, S194, and I235; that span reads GRS.

This sequence belongs to the tetrahydrofolate dehydrogenase/cyclohydrolase family. In terms of assembly, homodimer.

The catalysed reaction is (6R)-5,10-methylene-5,6,7,8-tetrahydrofolate + NADP(+) = (6R)-5,10-methenyltetrahydrofolate + NADPH. It catalyses the reaction (6R)-5,10-methenyltetrahydrofolate + H2O = (6R)-10-formyltetrahydrofolate + H(+). It participates in one-carbon metabolism; tetrahydrofolate interconversion. Functionally, catalyzes the oxidation of 5,10-methylenetetrahydrofolate to 5,10-methenyltetrahydrofolate and then the hydrolysis of 5,10-methenyltetrahydrofolate to 10-formyltetrahydrofolate. In Ectopseudomonas mendocina (strain ymp) (Pseudomonas mendocina), this protein is Bifunctional protein FolD 2.